A 490-amino-acid polypeptide reads, in one-letter code: GTPase Der (490 aa).

EngA-type G domains follow at residues 3–166 (PVIA…PKDE) and 196–369 (IKIA…KSAV). GTP contacts are provided by residues 9-16 (GRPNVGKS), 56-60 (DTGGI), 118-121 (NKID), 202-209 (GRPNVGKS), 249-253 (DTAGV), and 314-317 (NKWD). The KH-like domain occupies 370–454 (TRWPTSRLTQ…PIRIEFKGGE (85 aa)). The disordered stretch occupies residues 452 to 490 (GGENPYEGNKNTLTDRQVNKKRRMMSHHKKADKKRRDKR). The segment covering 470–490 (NKKRRMMSHHKKADKKRRDKR) has biased composition (basic residues).

This sequence belongs to the TRAFAC class TrmE-Era-EngA-EngB-Septin-like GTPase superfamily. EngA (Der) GTPase family. Associates with the 50S ribosomal subunit.

Its function is as follows. GTPase that plays an essential role in the late steps of ribosome biogenesis. This chain is GTPase Der, found in Pseudomonas savastanoi pv. phaseolicola (strain 1448A / Race 6) (Pseudomonas syringae pv. phaseolicola (strain 1448A / Race 6)).